A 323-amino-acid polypeptide reads, in one-letter code: 4-hydroxy-3-methylbut-2-enyl diphosphate reductase (323 aa).

[4Fe-4S] cluster is bound at residue C13. Positions 42 and 75 each coordinate (2E)-4-hydroxy-3-methylbut-2-enyl diphosphate. The dimethylallyl diphosphate site is built by H42 and H75. H42 and H75 together coordinate isopentenyl diphosphate. C97 is a [4Fe-4S] cluster binding site. H125 lines the (2E)-4-hydroxy-3-methylbut-2-enyl diphosphate pocket. H125 contacts dimethylallyl diphosphate. Residue H125 participates in isopentenyl diphosphate binding. Residue E127 is the Proton donor of the active site. Position 168 (T168) interacts with (2E)-4-hydroxy-3-methylbut-2-enyl diphosphate. [4Fe-4S] cluster is bound at residue C198. Residues S226, S227, N228, and S270 each contribute to the (2E)-4-hydroxy-3-methylbut-2-enyl diphosphate site. Residues S226, S227, N228, and S270 each coordinate dimethylallyl diphosphate. S226, S227, N228, and S270 together coordinate isopentenyl diphosphate.

This sequence belongs to the IspH family. It depends on [4Fe-4S] cluster as a cofactor.

The enzyme catalyses isopentenyl diphosphate + 2 oxidized [2Fe-2S]-[ferredoxin] + H2O = (2E)-4-hydroxy-3-methylbut-2-enyl diphosphate + 2 reduced [2Fe-2S]-[ferredoxin] + 2 H(+). It catalyses the reaction dimethylallyl diphosphate + 2 oxidized [2Fe-2S]-[ferredoxin] + H2O = (2E)-4-hydroxy-3-methylbut-2-enyl diphosphate + 2 reduced [2Fe-2S]-[ferredoxin] + 2 H(+). Its pathway is isoprenoid biosynthesis; dimethylallyl diphosphate biosynthesis; dimethylallyl diphosphate from (2E)-4-hydroxy-3-methylbutenyl diphosphate: step 1/1. It participates in isoprenoid biosynthesis; isopentenyl diphosphate biosynthesis via DXP pathway; isopentenyl diphosphate from 1-deoxy-D-xylulose 5-phosphate: step 6/6. In terms of biological role, catalyzes the conversion of 1-hydroxy-2-methyl-2-(E)-butenyl 4-diphosphate (HMBPP) into a mixture of isopentenyl diphosphate (IPP) and dimethylallyl diphosphate (DMAPP). Acts in the terminal step of the DOXP/MEP pathway for isoprenoid precursor biosynthesis. The sequence is that of 4-hydroxy-3-methylbut-2-enyl diphosphate reductase from Nitrosomonas europaea (strain ATCC 19718 / CIP 103999 / KCTC 2705 / NBRC 14298).